A 412-amino-acid chain; its full sequence is Serine hydroxymethyltransferase (412 aa).

(6S)-5,6,7,8-tetrahydrofolate contacts are provided by residues Leu-117 and 121 to 123 (GHL). An N6-(pyridoxal phosphate)lysine modification is found at Lys-226. 349–351 (SPF) lines the (6S)-5,6,7,8-tetrahydrofolate pocket.

It belongs to the SHMT family. Homodimer. Pyridoxal 5'-phosphate serves as cofactor.

The protein localises to the cytoplasm. It catalyses the reaction (6R)-5,10-methylene-5,6,7,8-tetrahydrofolate + glycine + H2O = (6S)-5,6,7,8-tetrahydrofolate + L-serine. It functions in the pathway one-carbon metabolism; tetrahydrofolate interconversion. It participates in amino-acid biosynthesis; glycine biosynthesis; glycine from L-serine: step 1/1. Its function is as follows. Catalyzes the reversible interconversion of serine and glycine with tetrahydrofolate (THF) serving as the one-carbon carrier. This reaction serves as the major source of one-carbon groups required for the biosynthesis of purines, thymidylate, methionine, and other important biomolecules. Also exhibits THF-independent aldolase activity toward beta-hydroxyamino acids, producing glycine and aldehydes, via a retro-aldol mechanism. In Oleidesulfovibrio alaskensis (strain ATCC BAA-1058 / DSM 17464 / G20) (Desulfovibrio alaskensis), this protein is Serine hydroxymethyltransferase.